The primary structure comprises 417 residues: 4-hydroxy-3-methylbut-2-en-1-yl diphosphate synthase (flavodoxin) (417 aa).

C304, C307, C350, and E357 together coordinate [4Fe-4S] cluster.

It belongs to the IspG family. Requires [4Fe-4S] cluster as cofactor.

It catalyses the reaction (2E)-4-hydroxy-3-methylbut-2-enyl diphosphate + oxidized [flavodoxin] + H2O + 2 H(+) = 2-C-methyl-D-erythritol 2,4-cyclic diphosphate + reduced [flavodoxin]. It functions in the pathway isoprenoid biosynthesis; isopentenyl diphosphate biosynthesis via DXP pathway; isopentenyl diphosphate from 1-deoxy-D-xylulose 5-phosphate: step 5/6. Converts 2C-methyl-D-erythritol 2,4-cyclodiphosphate (ME-2,4cPP) into 1-hydroxy-2-methyl-2-(E)-butenyl 4-diphosphate. This chain is 4-hydroxy-3-methylbut-2-en-1-yl diphosphate synthase (flavodoxin), found in Rhizobium meliloti (strain 1021) (Ensifer meliloti).